Consider the following 89-residue polypeptide: Small ribosomal subunit protein uS15 (89 aa).

The protein belongs to the universal ribosomal protein uS15 family. As to quaternary structure, part of the 30S ribosomal subunit. Forms a bridge to the 50S subunit in the 70S ribosome, contacting the 23S rRNA.

Its function is as follows. One of the primary rRNA binding proteins, it binds directly to 16S rRNA where it helps nucleate assembly of the platform of the 30S subunit by binding and bridging several RNA helices of the 16S rRNA. Functionally, forms an intersubunit bridge (bridge B4) with the 23S rRNA of the 50S subunit in the ribosome. In Kineococcus radiotolerans (strain ATCC BAA-149 / DSM 14245 / SRS30216), this protein is Small ribosomal subunit protein uS15.